Here is a 291-residue protein sequence, read N- to C-terminus: Bis(5'-nucleosyl)-tetraphosphatase, symmetrical (291 aa).

This sequence belongs to the Ap4A hydrolase family.

It catalyses the reaction P(1),P(4)-bis(5'-adenosyl) tetraphosphate + H2O = 2 ADP + 2 H(+). In terms of biological role, hydrolyzes diadenosine 5',5'''-P1,P4-tetraphosphate to yield ADP. The chain is Bis(5'-nucleosyl)-tetraphosphatase, symmetrical from Coxiella burnetii (strain CbuK_Q154) (Coxiella burnetii (strain Q154)).